We begin with the raw amino-acid sequence, 232 residues long: MRGKILLYQLKYRWQSLSIFGCFLCKMTLFRYQKIIYDTGVHQMRSFFYTICSSEQQESITDHHSLAEICQKFNILPEHVVIEQVDIKEVVSEQRLLRQLIHHEMNRQDTLVIPDLSCLGRTVEDLQNILFFCLQKEMFIYSYHPASRIEPSAESCLSFLIARQDTIDIHNLKSTKSRYRHVKKKLGRKEGSKYRRDITILKKGGFTQAEIAKKLSISLSTVKRHWNNGIIG.

This is an uncharacterized protein from Escherichia coli (strain K12).